The following is a 1069-amino-acid chain: MSPVKRWGSPCLFPLQLFSLCWVLSVAQSKTVRYSTFEEDAPGTVIGTLAEDLHMKVSGDTSFRLMKQFNSSLLRVREGDGQLTVGDAGLDRERLCGQSPQCVLAFDVVSFSQEQFRLVHVEVEVRDVNDHAPRFPRAQIPVEVSESAPVGTRIPLEVPVDEDVGANGLQSVRLAEPHSPFRVELQTRADGAQCADLVLLQELDRESQASYSLELVAQDGGRPPRSATAALSVRVLDANDHSPAFPQGAVAEVELAEDAPVGSLLLDLDAADPDEGPNGDVVFTFGARTPPEARHLFRLDPRSGRLTLAGQVDYERQDTYELDVRAQDRGPGPRTATCKVIVRIRDVNDNAPDISITPLAAPGAPATSPFAAAAAAAALGGADAASSAGSGTQETGVTSLVPEGAARESLVALVSTSDRDSGANGQVRCALYGHEHFRLQPAYAGSYLVVTAASLDRERIAEYNLTLVAEDRGAPPLRTVRPYTVRVGDENDNAPLFTKPVYEVSVRENNPPGAYLATVAARDPDLGRNGQVTYRLVEAEVGRSGEAVSTYVSVDPATGAIYALRSFDYETLRQLDVRVQASDGGSPQLSSNALVQVRVLDQNDHSPVLVHPAPANGSLEVAVPGRSTKDTAVARIQARDADEGANGELAFDLLQQEPREAFSIGRHTGEIVLTGDLSQEPPGRVFKALLVISDGGRPPLTTTATVSFVVTAGGGSAVPASAGSPEHFRPPGSRLAPSGPSLQWDTPLIVIIVLAGSCTLLLAAIIAIATTCNRRKKEVRKGGALREERPGAAGGGASAPGSPDETARGTGPRPNMFDVLTFPGSGKAPFGSPAADAPPPAVAAAEVPGSEGGSATGESACHFEGQQRLRGAHAEPYSASPGFGKEPAPPVAVWKGHSFNTISGREAEKFSGKDSGKGDSDFNDSDSDISGDALKKDLINHMQSGLWACTAECKILGHSDRCWSPSCAGPNTHPPPHPPAQMSTFCKSTSLPRDPLRRDNYYQAQLPKTVGLQSVYEKVLHRDYDRTVTLLSPPRPGRLPDLQEIGVPLYESPPGGRYVSPKKGTNENV.

A signal peptide spans 1 to 29 (MSPVKRWGSPCLFPLQLFSLCWVLSVAQS). 6 Cadherin domains span residues 30–135 (KTVR…APRF), 136–245 (PRAQ…SPAF), 247–354 (QGAV…APDI), 393–497 (QETG…APLF), 498–609 (TKPV…SPVL), and 615–721 (ANGS…VPAS). The Extracellular portion of the chain corresponds to 30–747 (KTVRYSTFEE…SGPSLQWDTP (718 aa)). N-linked (GlcNAc...) asparagine glycosylation is present at asparagine 616. Positions 719–738 (PASAGSPEHFRPPGSRLAPS) are disordered. The helical transmembrane segment at 748–768 (LIVIIVLAGSCTLLLAAIIAI) threads the bilayer. The Cytoplasmic segment spans residues 769-1069 (ATTCNRRKKE…SPKKGTNENV (301 aa)). Disordered stretches follow at residues 777–859 (KEVR…TGES), 905–927 (REAEKFSGKDSGKGDSDFNDSDS), and 1031–1069 (LSPPRPGRLPDLQEIGVPLYESPPGGRYVSPKKGTNENV). Composition is skewed to basic and acidic residues over residues 780–790 (RKGGALREERP) and 905–920 (REAEKFSGKDSGKGDS). Serine 1052 is subject to Phosphoserine.

In terms of assembly, the N-terminal extracellular domain forms homophilic interactions; these interactions activate p38 MAPK via TAOK2 and trigger endocytosis. Interacts with CDH2; this interaction may lead to CDH2 cointernalization. Interacts with CDH11. Interacts with TAOK2. As to expression, enriched in brain relative to peripheral tissues, with low expression in the testis. Expressed in hippocampal neurons (at protein level).

The protein localises to the cell membrane. The protein resides in the cell projection. Its subcellular location is the dendrite. It is found in the presynaptic cell membrane. It localises to the postsynaptic cell membrane. Its function is as follows. Calcium-dependent cell-adhesion protein. May play a role in activity-induced synaptic reorganization underlying long term memory. Could be involved in CDH2 internalization through TAOK2/p38 MAPK pathway. In hippocampal neurons, may play a role in the down-regulation of dendritic spines, maybe through its action on CDH2 endocytosis. This Rattus norvegicus (Rat) protein is Protocadherin-8 (Pcdh8).